An 86-amino-acid chain; its full sequence is Large ribosomal subunit protein bL31B (86 aa).

The protein belongs to the bacterial ribosomal protein bL31 family. Type B subfamily. Part of the 50S ribosomal subunit.

The chain is Large ribosomal subunit protein bL31B from Vibrio vulnificus (strain CMCP6).